The chain runs to 320 residues: AA9 family lytic polysaccharide monooxygenase-like protein CEL1 (320 aa).

The first 29 residues, 1 to 29 (MRLPSRQQVLKMLATFSLALGLFAAKVQA), serve as a signal peptide directing secretion. 2 cysteine pairs are disulfide-bonded: Cys-78–Cys-199 and Cys-121–Cys-126. Position 109 (His-109) interacts with Cu(2+). Asn-163 is a glycosylation site (N-linked (GlcNAc...) asparagine). Residues His-189 and Gln-194 each coordinate O2. Tyr-196 contributes to the Cu(2+) binding site. The segment at 255-284 (GSGGNGGSPTTTPHTTTPITTSPPPTSTPG) is disordered. Over residues 262–274 (SPTTTPHTTTPIT) the composition is skewed to low complexity. The 37-residue stretch at 284–320 (GTIPQYGQCGGIGWTGGTGCVAPYQCKVINDYYSQCL) folds into the CBM1 domain.

Belongs to the polysaccharide monooxygenase AA9 family. Requires Cu(2+) as cofactor.

The protein localises to the secreted. It carries out the reaction [(1-&gt;4)-beta-D-glucosyl]n+m + reduced acceptor + O2 = 4-dehydro-beta-D-glucosyl-[(1-&gt;4)-beta-D-glucosyl]n-1 + [(1-&gt;4)-beta-D-glucosyl]m + acceptor + H2O.. Functionally, lytic polysaccharide monooxygenase (LPMO)-like protein that binds strongly to cellulose. Seems not to acts as an endoglucanase, a ceUobiohydrolase able to hydrolyze fluorogenic cellobiosides, a /3-glucosidase, a xylanase, nor a cellobiose:quinone oxidoreductase. The protein is AA9 family lytic polysaccharide monooxygenase-like protein CEL1 of Agaricus bisporus (White button mushroom).